The sequence spans 117 residues: Ig heavy chain V region J558 (117 aa).

Residues Glu1–Ser116 form the Ig-like domain. An intrachain disulfide couples Cys22 to Cys96.

The protein is Ig heavy chain V region J558 of Mus musculus (Mouse).